A 424-amino-acid chain; its full sequence is Serine--tRNA ligase (424 aa).

Thr231–Glu233 is an L-serine binding site. ATP contacts are provided by residues Arg262–Glu264 and Val278. Glu285 serves as a coordination point for L-serine. Glu349 to Ser352 is an ATP binding site. Ser384 serves as a coordination point for L-serine.

It belongs to the class-II aminoacyl-tRNA synthetase family. Type-1 seryl-tRNA synthetase subfamily. As to quaternary structure, homodimer. The tRNA molecule binds across the dimer.

The protein localises to the cytoplasm. It catalyses the reaction tRNA(Ser) + L-serine + ATP = L-seryl-tRNA(Ser) + AMP + diphosphate + H(+). The enzyme catalyses tRNA(Sec) + L-serine + ATP = L-seryl-tRNA(Sec) + AMP + diphosphate + H(+). Its pathway is aminoacyl-tRNA biosynthesis; selenocysteinyl-tRNA(Sec) biosynthesis; L-seryl-tRNA(Sec) from L-serine and tRNA(Sec): step 1/1. Its function is as follows. Catalyzes the attachment of serine to tRNA(Ser). Is also able to aminoacylate tRNA(Sec) with serine, to form the misacylated tRNA L-seryl-tRNA(Sec), which will be further converted into selenocysteinyl-tRNA(Sec). This Chlamydia abortus (strain DSM 27085 / S26/3) (Chlamydophila abortus) protein is Serine--tRNA ligase.